The sequence spans 88 residues: Small ribosomal subunit protein bS20 (88 aa).

Belongs to the bacterial ribosomal protein bS20 family.

In terms of biological role, binds directly to 16S ribosomal RNA. This chain is Small ribosomal subunit protein bS20, found in Clostridium kluyveri (strain NBRC 12016).